A 377-amino-acid polypeptide reads, in one-letter code: Protein RecA (377 aa).

Glycine 76 to threonine 83 is an ATP binding site.

The protein belongs to the RecA family.

It localises to the cytoplasm. Its function is as follows. Can catalyze the hydrolysis of ATP in the presence of single-stranded DNA, the ATP-dependent uptake of single-stranded DNA by duplex DNA, and the ATP-dependent hybridization of homologous single-stranded DNAs. It interacts with LexA causing its activation and leading to its autocatalytic cleavage. The sequence is that of Protein RecA from Corynebacterium aurimucosum (strain ATCC 700975 / DSM 44827 / CIP 107346 / CN-1) (Corynebacterium nigricans).